The primary structure comprises 268 residues: Taurine import ATP-binding protein TauB (268 aa).

The 233-residue stretch at 4–236 (LAIRNISMRF…EGVDADLREV (233 aa)) folds into the ABC transporter domain. Position 41-48 (41-48 (GPSGCGKT)) interacts with ATP.

It belongs to the ABC transporter superfamily. Taurine importer (TC 3.A.1.17.1) family. The complex is composed of two ATP-binding proteins (TauB), two transmembrane proteins (TauC) and a solute-binding protein (TauA).

The protein localises to the cell inner membrane. The catalysed reaction is taurine(out) + ATP + H2O = taurine(in) + ADP + phosphate + H(+). Its function is as follows. Part of the ABC transporter complex TauABC involved in taurine import. Responsible for energy coupling to the transport system. The polypeptide is Taurine import ATP-binding protein TauB (Jannaschia sp. (strain CCS1)).